Reading from the N-terminus, the 224-residue chain is Casparian strip membrane protein 1 (224 aa).

The interval 1-22 (MSSGEPAAVSIPIHDHHGKAPA) is disordered. Residues 1–62 (MSSGEPAAVS…RGDHHRGSRC (62 aa)) are Cytoplasmic-facing. The chain crosses the membrane as a helical span at residues 63-83 (LAFLDFILRIAAFGPALAAAI). The Extracellular segment spans residues 84 to 110 (STGTSDETLSVFTEFYQFRARFDDFPA). The helical transmembrane segment at 111–131 (FLFFLVANAIVAGYLVLSLPF) threads the bilayer. Topologically, residues 132 to 145 (SAVLVIRPQTIGLR) are cytoplasmic. The helical transmembrane segment at 146–166 (LLLLVCDMIMAAMLTAAASAA) threads the bilayer. The Extracellular portion of the chain corresponds to 167–200 (AAIVDLAHNGNLRANWVAICMQFHGFCQRTSGSV). Residues 201–221 (VASFLTVVILMFLVILAACSI) traverse the membrane as a helical segment. The Cytoplasmic segment spans residues 222 to 224 (RKR).

This sequence belongs to the Casparian strip membrane proteins (CASP) family. As to quaternary structure, homodimer and heterodimers.

It localises to the cell membrane. Its function is as follows. Regulates membrane-cell wall junctions and localized cell wall deposition. Required for establishment of the Casparian strip membrane domain (CSD) and the subsequent formation of Casparian strips, a cell wall modification of the root endodermis that determines an apoplastic barrier between the intraorganismal apoplasm and the extraorganismal apoplasm and prevents lateral diffusion. This is Casparian strip membrane protein 1 from Oryza sativa subsp. indica (Rice).